A 298-amino-acid polypeptide reads, in one-letter code: MMSIPVNPTNASIQPQSLYDAWADLAWRAMLTEVNLSPKPGLVDRLNCGAHKDMALEDFHRSAEAIRDWLPRFMEYGASCTRLPPESVLAGLRPLGMACEAAMFRATAGVNTHKGSIFSLGLLCAAIGRLYQLRQPITAQTLCATSAAFCRGLTARELRQNNLQLTAGQRLYQQLGLTGARGEAEAGYPLVIRHALPHYRALLAQGRDPELALLDTLLLLMSLNGDTNVASRGGSDGLRWLQQHASFLLRQGGIRTPDDLVYLHQFNQQCIERNLSPGGSADLLIVTWFLAQISQVNH.

It belongs to the CitG/MdcB family.

It catalyses the reaction 3'-dephospho-CoA + ATP = 2'-(5''-triphospho-alpha-D-ribosyl)-3'-dephospho-CoA + adenine. In Salmonella arizonae (strain ATCC BAA-731 / CDC346-86 / RSK2980), this protein is Probable 2-(5''-triphosphoribosyl)-3'-dephosphocoenzyme-A synthase.